The chain runs to 543 residues: ADP,ATP carrier protein 3 (543 aa).

The next 10 helical transmembrane spans lie at 46-66 (VLYL…MGNL), 86-106 (IFLP…LSLF), 111-131 (MFDI…LVVW), 175-195 (FLFL…FNIF), 209-229 (ISVY…LTLV), 243-263 (ELGF…ILAL), 306-326 (LLIA…LVEA), 346-366 (FANF…LVVI), 382-402 (LASL…LIAF), and 504-524 (SVSG…LKYL).

The protein belongs to the ADP/ATP translocase tlc family.

The protein resides in the mitosome membrane. ATP transporter involved in the uptake of ATP from the parasite cell cytoplasm into the mitosome matrix. Equilibrates nucleotide pools across a concentration gradient between both sides of the mitosome membrane. This chain is ADP,ATP carrier protein 3 (NTT3), found in Encephalitozoon cuniculi (strain GB-M1) (Microsporidian parasite).